Consider the following 164-residue polypeptide: Transcriptional repressor NrdR (164 aa).

Residues 3–34 (CPFCRHDDTQVVDSRVSEDGAAIRRRRRCPAC) fold into a zinc finger. The ATP-cone domain occupies 49-139 (PSVVKKDGSR…VYRRFEDVSE (91 aa)).

It belongs to the NrdR family. The cofactor is Zn(2+).

In terms of biological role, negatively regulates transcription of bacterial ribonucleotide reductase nrd genes and operons by binding to NrdR-boxes. This Paraburkholderia phymatum (strain DSM 17167 / CIP 108236 / LMG 21445 / STM815) (Burkholderia phymatum) protein is Transcriptional repressor NrdR.